Reading from the N-terminus, the 778-residue chain is Mitochondrial intermediate peptidase (778 aa).

Residues 1 to 37 (MIRTVTRPRQWQRWVYSSCLLQRAVPPAAARQQPRFT) constitute a mitochondrion transit peptide. Position 557 (histidine 557) interacts with Zn(2+). Glutamate 558 is an active-site residue. The Zn(2+) site is built by histidine 561 and histidine 564.

This sequence belongs to the peptidase M3 family. Requires Zn(2+) as cofactor.

It is found in the mitochondrion matrix. The catalysed reaction is Release of an N-terminal octapeptide as second stage of processing of some proteins imported into the mitochondrion.. Functionally, cleaves proteins, imported into the mitochondrion, to their mature size. While most mitochondrial precursor proteins are processed to the mature form in one step by mitochondrial processing peptidase (MPP), the sequential cleavage by MIP of an octapeptide after initial processing by MPP is a required step for a subgroup of nuclear-encoded precursor proteins destined for the matrix or the inner membrane. The polypeptide is Mitochondrial intermediate peptidase (OCT1) (Chaetomium globosum (strain ATCC 6205 / CBS 148.51 / DSM 1962 / NBRC 6347 / NRRL 1970) (Soil fungus)).